The primary structure comprises 298 residues: ATP-dependent Clp protease proteolytic subunit 5, chloroplastic (298 aa).

Residues methionine 1–glutamine 100 constitute a chloroplast transit peptide. Position 101 is an N-acetylglycine (glycine 101). The active-site Nucleophile is the serine 193. The active site involves histidine 218.

The protein belongs to the peptidase S14 family. In terms of assembly, component of the chloroplastic Clp protease core complex which consist of at least 16 proteins: CLPP4 (3 copies), CLPP5 (3 copies), CLPR4 (2 copies), ClpP1 (1 copy), CLPP6 (1 copy), CLPR2 (1 copy), CLPT1 (1 copy), CLPT2 (1 copy) and 3 copies of CLPP3 and/or CLPR1 and/or CLPR3. The core complex is organized in two heptameric rings, one containing CLPP3,4,5,6 in a 1:2:3:1 ratio and the other CLPP1 and CLPR1,2,3,4 in a 3:1:1:1:1 ratio. Interacts with CHIP. Post-translationally, ubiquitinated in vitro by CHIP. As to expression, mostly expressed in leaves. Also detected in stems, and to a lower extent, in roots (at protein level).

The protein resides in the plastid. The protein localises to the chloroplast stroma. The catalysed reaction is Hydrolysis of proteins to small peptides in the presence of ATP and magnesium. alpha-casein is the usual test substrate. In the absence of ATP, only oligopeptides shorter than five residues are hydrolyzed (such as succinyl-Leu-Tyr-|-NHMec, and Leu-Tyr-Leu-|-Tyr-Trp, in which cleavage of the -Tyr-|-Leu- and -Tyr-|-Trp bonds also occurs).. Functionally, cleaves peptides in various proteins in a process that requires ATP hydrolysis. Has a chymotrypsin-like activity. Plays a major role in the degradation of misfolded proteins. In Arabidopsis thaliana (Mouse-ear cress), this protein is ATP-dependent Clp protease proteolytic subunit 5, chloroplastic.